Reading from the N-terminus, the 70-residue chain is Putative microRNA 17 host gene protein (70 aa).

Topologically, residues methionine 1–proline 20 are cytoplasmic. A helical transmembrane segment spans residues leucine 21–cysteine 43. At glutamine 44–leucine 70 the chain is on the extracellular side.

Highly expressed in B-cell lymphoma and lung cancer.

It is found in the membrane. This is Putative microRNA 17 host gene protein (MIR17HG) from Homo sapiens (Human).